We begin with the raw amino-acid sequence, 827 residues long: Periplasmic nitrate reductase (827 aa).

Residues 1–32 constitute a signal peptide (tat-type signal); that stretch reads MTLSRRAFIKQTAAATAASAAGVVLPGVDALA. The 4Fe-4S Mo/W bis-MGD-type domain occupies 37-93; sequence LTWSKAPCRFCGTGCGVSVGVKNGKVVATQGDPQAEVNRGLNCVKGYFLSKIMYGQD. The [4Fe-4S] cluster site is built by C44, C47, C51, and C79. Mo-bis(molybdopterin guanine dinucleotide) contacts are provided by residues K81, Q148, N173, C177, 241–245, 260–262, M371, Q375, N481, 507–508, K530, D557, and 717–726; these read STFEH, QSD, SD, and TGRVLEHWHS. W793 contributes to the substrate binding site. Positions 801 and 818 each coordinate Mo-bis(molybdopterin guanine dinucleotide).

This sequence belongs to the prokaryotic molybdopterin-containing oxidoreductase family. NasA/NapA/NarB subfamily. As to quaternary structure, component of the periplasmic nitrate reductase NapAB complex composed of NapA and NapB. [4Fe-4S] cluster is required as a cofactor. The cofactor is Mo-bis(molybdopterin guanine dinucleotide). In terms of processing, predicted to be exported by the Tat system. The position of the signal peptide cleavage has not been experimentally proven.

It is found in the periplasm. It carries out the reaction 2 Fe(II)-[cytochrome] + nitrate + 2 H(+) = 2 Fe(III)-[cytochrome] + nitrite + H2O. Its function is as follows. Catalytic subunit of the periplasmic nitrate reductase complex NapAB. Receives electrons from NapB and catalyzes the reduction of nitrate to nitrite. This Paraburkholderia xenovorans (strain LB400) protein is Periplasmic nitrate reductase.